Here is a 440-residue protein sequence, read N- to C-terminus: Coenzyme A disulfide reductase (440 aa).

Residue 8–33 (GAVAGGATCASQIRRLDKDSEITIFE) coordinates FAD. 5 residues coordinate substrate: threonine 15, glutamine 19, arginine 22, serine 39, and asparagine 42. Cysteine 43 acts as the Nucleophile in catalysis. Cysteine 43 (redox-active) is an active-site residue. Lysine 71 serves as a coordination point for substrate. Residue 151–166 (ALVVGAGYISLEVLEN) coordinates NADP(+). 267–277 (TNIPNIYALGD) contacts FAD. Residue histidine 299 participates in substrate binding. Residue tyrosine 419 coordinates FAD. Lysine 427 provides a ligand contact to substrate.

This sequence belongs to the class-III pyridine nucleotide-disulfide oxidoreductase family. In terms of assembly, homodimer. FAD serves as cofactor.

The enzyme catalyses NADP(+) + 2 CoA = CoA-disulfide + NADPH + H(+). Catalyzes specifically the NADPH-dependent reduction of coenzyme A disulfide. The protein is Coenzyme A disulfide reductase of Staphylococcus haemolyticus (strain JCSC1435).